We begin with the raw amino-acid sequence, 252 residues long: Imidazole glycerol phosphate synthase subunit HisF (252 aa).

Catalysis depends on residues D11 and D130.

This sequence belongs to the HisA/HisF family. As to quaternary structure, heterodimer of HisH and HisF.

Its subcellular location is the cytoplasm. It carries out the reaction 5-[(5-phospho-1-deoxy-D-ribulos-1-ylimino)methylamino]-1-(5-phospho-beta-D-ribosyl)imidazole-4-carboxamide + L-glutamine = D-erythro-1-(imidazol-4-yl)glycerol 3-phosphate + 5-amino-1-(5-phospho-beta-D-ribosyl)imidazole-4-carboxamide + L-glutamate + H(+). The protein operates within amino-acid biosynthesis; L-histidine biosynthesis; L-histidine from 5-phospho-alpha-D-ribose 1-diphosphate: step 5/9. IGPS catalyzes the conversion of PRFAR and glutamine to IGP, AICAR and glutamate. The HisF subunit catalyzes the cyclization activity that produces IGP and AICAR from PRFAR using the ammonia provided by the HisH subunit. This is Imidazole glycerol phosphate synthase subunit HisF from Staphylococcus aureus (strain MRSA252).